Reading from the N-terminus, the 348-residue chain is Spermatogenesis-associated protein 32 (348 aa).

Basic and acidic residues predominate over residues 27–36 (YHHHHHPLED). The interval 27 to 61 (YHHHHHPLEDNKDEDNEMGTELSSMKPPPKVDPDP) is disordered. Residues S149 and S152 each carry the phosphoserine modification. Residues 308–329 (APATSPELQEDKDDSVPGTKKG) are disordered. Position 330 is a phosphothreonine (T330).

Interacts with syntaxin-1 and ACTB. As to expression, abundantly expressed in testes. Expressed in germ cells, but not in Sertoli or Leydig cells of the adult testis. Localized at the acrosomal region of the round and elongated spermatids at stages VIII-X.

The chain is Spermatogenesis-associated protein 32 (Spata32) from Rattus norvegicus (Rat).